A 1325-amino-acid chain; its full sequence is SCAN domain-containing protein 3 (1325 aa).

Positions Arg-52–Leu-134 constitute an SCAN box domain. A coiled-coil region spans residues Lys-246–Arg-275. In terms of domain architecture, Integrase catalytic spans Lys-366–Glu-526. A coiled-coil region spans residues Ala-542–Asn-568.

As to expression, weakly expressed in the lung (at protein level).

It localises to the nucleus. In Homo sapiens (Human), this protein is SCAN domain-containing protein 3.